We begin with the raw amino-acid sequence, 338 residues long: tRNA N6-adenosine threonylcarbamoyltransferase (338 aa).

2 residues coordinate Fe cation: His111 and His115. Substrate contacts are provided by residues 134 to 138, Asp167, Gly180, and Asn272; that span reads LVSGG. Asp300 contributes to the Fe cation binding site.

Belongs to the KAE1 / TsaD family. Fe(2+) serves as cofactor.

The protein resides in the cytoplasm. It carries out the reaction L-threonylcarbamoyladenylate + adenosine(37) in tRNA = N(6)-L-threonylcarbamoyladenosine(37) in tRNA + AMP + H(+). In terms of biological role, required for the formation of a threonylcarbamoyl group on adenosine at position 37 (t(6)A37) in tRNAs that read codons beginning with adenine. Is involved in the transfer of the threonylcarbamoyl moiety of threonylcarbamoyl-AMP (TC-AMP) to the N6 group of A37, together with TsaE and TsaB. TsaD likely plays a direct catalytic role in this reaction. This chain is tRNA N6-adenosine threonylcarbamoyltransferase, found in Aliivibrio fischeri (strain MJ11) (Vibrio fischeri).